We begin with the raw amino-acid sequence, 245 residues long: Orotidine 5'-phosphate decarboxylase (245 aa).

Substrate-binding positions include aspartate 22, lysine 44, 71-80, threonine 131, arginine 192, glutamine 201, glycine 221, and arginine 222; that span reads DLKFHDIPNT. The active-site Proton donor is the lysine 73.

This sequence belongs to the OMP decarboxylase family. Type 1 subfamily. As to quaternary structure, homodimer.

The enzyme catalyses orotidine 5'-phosphate + H(+) = UMP + CO2. It participates in pyrimidine metabolism; UMP biosynthesis via de novo pathway; UMP from orotate: step 2/2. Catalyzes the decarboxylation of orotidine 5'-monophosphate (OMP) to uridine 5'-monophosphate (UMP). This is Orotidine 5'-phosphate decarboxylase from Shigella boydii serotype 18 (strain CDC 3083-94 / BS512).